The chain runs to 700 residues: Mitogen-activated protein kinase 9 (700 aa).

Positions 107-398 (YRIQEVIGKG…AEEALTDPYF (292 aa)) constitute a Protein kinase domain. ATP-binding positions include 113 to 121 (IGKGSYGVV) and lysine 136. The Proton acceptor role is filled by aspartate 233. A Phosphothreonine modification is found at threonine 269. The TXY signature appears at 269 to 271 (TDY). Tyrosine 271 carries the phosphotyrosine modification. The interval 475-523 (EESNGSGSAIPMERKHASLPRSTTVHSTPIPPKEQPLAASLKSSRPVSD) is disordered.

The protein belongs to the protein kinase superfamily. CMGC Ser/Thr protein kinase family. MAP kinase subfamily. Dually phosphorylated on Thr-269 and Tyr-271, which activates the enzyme.

It carries out the reaction L-seryl-[protein] + ATP = O-phospho-L-seryl-[protein] + ADP + H(+). It catalyses the reaction L-threonyl-[protein] + ATP = O-phospho-L-threonyl-[protein] + ADP + H(+). Its activity is regulated as follows. Activated by threonine and tyrosine phosphorylation. This Oryza sativa subsp. japonica (Rice) protein is Mitogen-activated protein kinase 9 (MPK9).